The primary structure comprises 378 residues: Alanine racemase (378 aa).

Lys35 serves as the catalytic Proton acceptor; specific for D-alanine. The residue at position 35 (Lys35) is an N6-(pyridoxal phosphate)lysine. A substrate-binding site is contributed by Arg133. Catalysis depends on Tyr266, which acts as the Proton acceptor; specific for L-alanine. Met314 is a binding site for substrate.

Belongs to the alanine racemase family. Requires pyridoxal 5'-phosphate as cofactor.

It carries out the reaction L-alanine = D-alanine. Its pathway is amino-acid biosynthesis; D-alanine biosynthesis; D-alanine from L-alanine: step 1/1. Functionally, catalyzes the interconversion of L-alanine and D-alanine. May also act on other amino acids. In Beutenbergia cavernae (strain ATCC BAA-8 / DSM 12333 / CCUG 43141 / JCM 11478 / NBRC 16432 / NCIMB 13614 / HKI 0122), this protein is Alanine racemase (alr).